The primary structure comprises 388 residues: Succinate--CoA ligase [ADP-forming] subunit beta (388 aa).

The ATP-grasp domain maps to lysine 9 to glutamate 244. ATP is bound by residues lysine 46, glycine 53 to glycine 55, glutamate 99, threonine 102, and glutamate 107. Mg(2+) contacts are provided by asparagine 199 and aspartate 213. Substrate-binding positions include asparagine 264 and glycine 321–valine 323.

Belongs to the succinate/malate CoA ligase beta subunit family. As to quaternary structure, heterotetramer of two alpha and two beta subunits. It depends on Mg(2+) as a cofactor.

It catalyses the reaction succinate + ATP + CoA = succinyl-CoA + ADP + phosphate. The catalysed reaction is GTP + succinate + CoA = succinyl-CoA + GDP + phosphate. The protein operates within carbohydrate metabolism; tricarboxylic acid cycle; succinate from succinyl-CoA (ligase route): step 1/1. In terms of biological role, succinyl-CoA synthetase functions in the citric acid cycle (TCA), coupling the hydrolysis of succinyl-CoA to the synthesis of either ATP or GTP and thus represents the only step of substrate-level phosphorylation in the TCA. The beta subunit provides nucleotide specificity of the enzyme and binds the substrate succinate, while the binding sites for coenzyme A and phosphate are found in the alpha subunit. This is Succinate--CoA ligase [ADP-forming] subunit beta from Idiomarina loihiensis (strain ATCC BAA-735 / DSM 15497 / L2-TR).